The chain runs to 151 residues: Differentiation-associated protein 2 (151 aa).

The first 22 residues, 1-22, serve as a signal peptide directing secretion; the sequence is MKQIIRLITTLLLLSLIGITCA.

The protein resides in the endoplasmic reticulum. Its subcellular location is the vacuole. Functionally, has an essential role in the initiation of differentiation. Also required for cAMP signaling. The polypeptide is Differentiation-associated protein 2 (dia2) (Dictyostelium discoideum (Social amoeba)).